We begin with the raw amino-acid sequence, 74 residues long: Mitotic-spindle organizing protein 1 (74 aa).

It belongs to the MOZART1 family. Part of the gamma-tubulin complex.

Its subcellular location is the cytoplasm. The protein resides in the cytoskeleton. It localises to the microtubule organizing center. It is found in the spindle pole body. Required for gamma-tubulin complex recruitment to the microtubule organizing center (MTOC). The polypeptide is Mitotic-spindle organizing protein 1 (Emericella nidulans (strain FGSC A4 / ATCC 38163 / CBS 112.46 / NRRL 194 / M139) (Aspergillus nidulans)).